The following is a 146-amino-acid chain: Hemoglobin subunit beta (146 aa).

Positions 2–146 (HWSAEEKQLI…VAHALARKYH (145 aa)) constitute a Globin domain. Positions 63 and 92 each coordinate heme b.

This sequence belongs to the globin family. In terms of assembly, heterotetramer of two alpha chains and two beta chains. Red blood cells.

Its function is as follows. Involved in oxygen transport from the lung to the various peripheral tissues. This chain is Hemoglobin subunit beta (HBB), found in Psittacula krameri (Rose-ringed parakeet).